The primary structure comprises 119 residues: NLVQFSYLIQCANHGKRPTWHYMDYGCYCGAGGSGTPVDELDRCCKIHDDCYDEAGKKGCFPKMSAYDYYCGENGPYCRNIKKKCLRFVCDCDVEAAFCFAKAPYNNANWNIDTKKRCQ.

Intrachain disulfides connect cysteine 11-cysteine 71, cysteine 27-cysteine 118, cysteine 29-cysteine 45, cysteine 44-cysteine 99, cysteine 51-cysteine 92, cysteine 60-cysteine 85, and cysteine 78-cysteine 90. Ca(2+) is bound by residues tyrosine 28, glycine 30, and glycine 32. Histidine 48 is an active-site residue. Aspartate 49 serves as a coordination point for Ca(2+). Aspartate 93 is a catalytic residue.

Belongs to the phospholipase A2 family. Group I subfamily. D49 sub-subfamily. Monomer. Ca(2+) is required as a cofactor. In terms of tissue distribution, expressed by the venom gland.

It is found in the secreted. The catalysed reaction is a 1,2-diacyl-sn-glycero-3-phosphocholine + H2O = a 1-acyl-sn-glycero-3-phosphocholine + a fatty acid + H(+). Functionally, snake venom phospholipase A2 (PLA2) that inhibits neuromuscular transmission by blocking acetylcholine release from the nerve termini. Is directly toxic to skeletal muscle upon local application in vivo (dystrophic effect). Also has direct nephrotoxicity in experimental mice; a single subcutaneous dose (1.38 ug/kg) produces renal tubular and glomerular damage within 24 hours. PLA2 catalyzes the calcium-dependent hydrolysis of the 2-acyl groups in 3-sn-phosphoglycerides. The chain is Basic phospholipase A2 notexin from Notechis scutatus scutatus (Mainland tiger snake).